Consider the following 437-residue polypeptide: Glutamyl-tRNA reductase (437 aa).

Substrate contacts are provided by residues 49-52 (TCNR), Ser-109, 114-116 (EGQ), and Gln-120. Cys-50 functions as the Nucleophile in the catalytic mechanism. 198-203 (GAGRMS) provides a ligand contact to NADP(+).

The protein belongs to the glutamyl-tRNA reductase family. Homodimer.

The enzyme catalyses (S)-4-amino-5-oxopentanoate + tRNA(Glu) + NADP(+) = L-glutamyl-tRNA(Glu) + NADPH + H(+). It participates in porphyrin-containing compound metabolism; protoporphyrin-IX biosynthesis; 5-aminolevulinate from L-glutamyl-tRNA(Glu): step 1/2. It functions in the pathway porphyrin-containing compound metabolism; chlorophyll biosynthesis. In terms of biological role, catalyzes the NADPH-dependent reduction of glutamyl-tRNA(Glu) to glutamate 1-semialdehyde (GSA). The polypeptide is Glutamyl-tRNA reductase (Synechococcus sp. (strain CC9311)).